A 157-amino-acid chain; its full sequence is Phosphopantetheine adenylyltransferase (157 aa).

S8 is a substrate binding site. ATP contacts are provided by residues 8–9 (SF) and H16. Residues K40, T72, and R86 each contribute to the substrate site. ATP is bound by residues 87 to 89 (GLR), E97, and 122 to 128 (HSFLSSS).

It belongs to the bacterial CoaD family. As to quaternary structure, homohexamer. Mg(2+) serves as cofactor.

Its subcellular location is the cytoplasm. The catalysed reaction is (R)-4'-phosphopantetheine + ATP + H(+) = 3'-dephospho-CoA + diphosphate. It functions in the pathway cofactor biosynthesis; coenzyme A biosynthesis; CoA from (R)-pantothenate: step 4/5. Its function is as follows. Reversibly transfers an adenylyl group from ATP to 4'-phosphopantetheine, yielding dephospho-CoA (dPCoA) and pyrophosphate. This is Phosphopantetheine adenylyltransferase from Prochlorococcus marinus (strain MIT 9313).